The primary structure comprises 427 residues: Probable glucuronosyltransferase Os03g0107900 (427 aa).

At 1–33 (MAMRGDPKQRRASASAPHGGAAHHVADKLRRHS) the chain is on the cytoplasmic side. The chain crosses the membrane as a helical; Signal-anchor for type II membrane protein span at residues 34–54 (TFLLLLLLLWFALSLYLFLSA). Residues 55–427 (TPPPPRPAFL…QRRHVESWKR (373 aa)) are Lumenal-facing. N-linked (GlcNAc...) asparagine glycosylation is found at N136, N168, N264, and N374.

The protein belongs to the glycosyltransferase 47 family.

It is found in the golgi apparatus membrane. In terms of biological role, involved in the synthesis of glucuronoxylan hemicellulose in secondary cell walls. The sequence is that of Probable glucuronosyltransferase Os03g0107900 from Oryza sativa subsp. japonica (Rice).